Reading from the N-terminus, the 242-residue chain is ATP synthase subunit a, chloroplastic (242 aa).

The next 5 membrane-spanning stretches (helical) occupy residues 34–54 (GQVL…AVLG), 93–113 (VPFI…GAII), 132–152 (INTT…AGLS), 188–210 (LFGN…PLVI), and 222–242 (GSVQ…EALE).

It belongs to the ATPase A chain family. F-type ATPases have 2 components, CF(1) - the catalytic core - and CF(0) - the membrane proton channel. CF(1) has five subunits: alpha(3), beta(3), gamma(1), delta(1), epsilon(1). CF(0) has four main subunits: a, b, b' and c.

Its subcellular location is the plastid. It is found in the chloroplast thylakoid membrane. In terms of biological role, key component of the proton channel; it plays a direct role in the translocation of protons across the membrane. This is ATP synthase subunit a, chloroplastic from Trieres chinensis (Marine centric diatom).